A 153-amino-acid polypeptide reads, in one-letter code: Ribosomal RNA large subunit methyltransferase H (153 aa).

S-adenosyl-L-methionine-binding positions include leucine 63, glycine 102, and 121–126; that span reads FGKITL.

Belongs to the RNA methyltransferase RlmH family. Homodimer.

The protein resides in the cytoplasm. The catalysed reaction is pseudouridine(1915) in 23S rRNA + S-adenosyl-L-methionine = N(3)-methylpseudouridine(1915) in 23S rRNA + S-adenosyl-L-homocysteine + H(+). Specifically methylates the pseudouridine at position 1915 (m3Psi1915) in 23S rRNA. In Sulfurovum sp. (strain NBC37-1), this protein is Ribosomal RNA large subunit methyltransferase H.